Consider the following 417-residue polypeptide: Queuine tRNA-ribosyltransferase accessory subunit 2 (417 aa).

Residues Cys-324, Cys-326, Cys-329, and His-355 each coordinate Zn(2+).

This sequence belongs to the queuine tRNA-ribosyltransferase family. QTRT2 subfamily. In terms of assembly, heterodimer of a catalytic subunit and an accessory subunit. Requires Zn(2+) as cofactor.

The protein resides in the cytoplasm. Non-catalytic subunit of the queuine tRNA-ribosyltransferase (TGT) that catalyzes the base-exchange of a guanine (G) residue with queuine (Q) at position 34 (anticodon wobble position) in tRNAs with GU(N) anticodons (tRNA-Asp, -Asn, -His and -Tyr), resulting in the hypermodified nucleoside queuosine (7-(((4,5-cis-dihydroxy-2-cyclopenten-1-yl)amino)methyl)-7-deazaguanosine). The chain is Queuine tRNA-ribosyltransferase accessory subunit 2 from Drosophila pseudoobscura pseudoobscura (Fruit fly).